A 478-amino-acid polypeptide reads, in one-letter code: RNA-binding protein 42 (478 aa).

Over residues 1-20 the composition is skewed to low complexity; that stretch reads MASAMAGAGPAPGLPVAGGP. Residues 1–33 form a disordered region; it reads MASAMAGAGPAPGLPVAGGPVVPGPGVGIPGKS. Residue Ala-2 is modified to N-acetylalanine. A Phosphoserine modification is found at Ser-133. Residues Arg-151, Arg-156, Arg-166, and Arg-179 each carry the asymmetric dimethylarginine modification. Disordered stretches follow at residues 171–209 and 317–354; these read LSSAAGGPRPMALRPPHQALVGPPLPGPPGPPMMLPPMA and SLRPRPRPPRPEPPPGLMALEVPEPLGEDKKKGKPEKL. Residues 193–205 show a composition bias toward pro residues; that stretch reads PPLPGPPGPPMML. The tract at residues 234-478 is necessary for interaction with HNRNPK; the sequence is DLGLGLGLGL…QKEKKKLGLR (245 aa). Over residues 343-354 the composition is skewed to basic and acidic residues; that stretch reads GEDKKKGKPEKL. Positions 379–457 constitute an RRM domain; the sequence is FRIFCGDLGN…RPIKLRKSMW (79 aa).

The protein belongs to the RRM RBM42 family. Interacts with HNRNPK.

Its subcellular location is the nucleus. The protein resides in the cytoplasm. Functionally, binds (via the RRM domain) to the 3' untranslated region (UTR) of p21 mRNA. This is RNA-binding protein 42 (Rbm42) from Rattus norvegicus (Rat).